Consider the following 276-residue polypeptide: Protease HtpX homolog (276 aa).

The helical transmembrane segment at 14–34 (IVLFALIGQALGGTGGMLLAF) threads the bilayer. Histidine 130 is a Zn(2+) binding site. Glutamate 131 is an active-site residue. Residue histidine 134 participates in Zn(2+) binding. Helical transmembrane passes span 145 to 165 (VAAT…FFGG) and 171 to 191 (LVSL…QSAI). Glutamate 196 provides a ligand contact to Zn(2+).

This sequence belongs to the peptidase M48B family. The cofactor is Zn(2+).

The protein localises to the cell inner membrane. This chain is Protease HtpX homolog, found in Salinibacter ruber (strain DSM 13855 / M31).